The chain runs to 332 residues: Cysteine and histidine-rich domain-containing protein 1 (332 aa).

Residue A2 is modified to N-acetylalanine. The interaction with PPP5C stretch occupies residues A2–V77. Residues C5, C10, C24, H27, C42, and C43 each coordinate Zn(2+). CHORD domains lie at C5–H64 and C157–H216. Position 47 is a phosphothreonine (T47). S51 carries the post-translational modification Phosphoserine. Zn(2+) is bound by residues C59, H64, C157, C162, C176, H179, C194, C195, C211, and H216. The interval G62–K82 is disordered. Positions H64–K82 are enriched in basic and acidic residues. Positions N65 to E316 are interaction with HSP90AA1 and HSP90AB1. The CS domain occupies V227 to E316.

In terms of assembly, interacts with HSP90AA1, HSP90AB1, PPP5C, ROCK1 and ROCK2.

In terms of biological role, regulates centrosome duplication, probably by inhibiting the kinase activity of ROCK2. Proposed to act as co-chaperone for HSP90. May play a role in the regulation of NOD1 via a HSP90 chaperone complex. In vitro, has intrinsic chaperone activity. This function may be achieved by inhibiting association of ROCK2 with NPM1. Plays a role in ensuring the localization of the tyrosine kinase receptor EGFR to the plasma membrane, and thus ensures the subsequent regulation of EGFR activity and EGF-induced actin cytoskeleton remodeling. Involved in stress response. Prevents tumorigenesis. This is Cysteine and histidine-rich domain-containing protein 1 (CHORDC1) from Macaca fascicularis (Crab-eating macaque).